Consider the following 338-residue polypeptide: MTVLITGGTGFIGSHTAVSLVQSGYDAVILDNLCNSSAAVLPRLRQITGRNIPFYQGDIRDCQILRQIFSEHEIESVIHFAGLKAVGESVAEPTKYYGNNVYGSLVLAEEMARAGVLKIVFSSSATVYGDAEKVPYTEDMRPGDTANPYGASKAMVERMLTDIQKADPRWSVILLRYFNPIGAHESGLIGEQPNGVPNNLLPYICQVASGRLPQLSVFGGDYPTPDGTGMRDYIHVMDLAEGHIAAMKAKGGVAGVHLFNLGSGRAYSVLEIIRAFEAASGLHIPYRIQPRRAGDLACSYADPSHTKQQTGWETKRGLQQMMEDSWRWVSRNPGRYGD.

Residues 11–12 (FI), 31–36 (DNLCNS), 58–59 (DI), 80–84 (FAGLK), asparagine 99, serine 124, tyrosine 149, lysine 153, and phenylalanine 178 contribute to the NAD(+) site. Residues serine 124 and tyrosine 149 each coordinate substrate. Tyrosine 149 functions as the Proton acceptor in the catalytic mechanism. Residues asparagine 179, 199-200 (NL), 216-218 (SVF), arginine 231, and 292-295 (RAGD) each bind substrate.

The protein belongs to the NAD(P)-dependent epimerase/dehydratase family. Homodimer. The cofactor is NAD(+).

The catalysed reaction is UDP-alpha-D-glucose = UDP-alpha-D-galactose. It functions in the pathway carbohydrate metabolism; galactose metabolism. Functionally, involved in the metabolism of galactose. Plays an essential role in the incorporation of galactose into meningococcal lipopolysaccharide surface molecules, which are important for pathogenesis. Catalyzes the conversion of UDP-galactose (UDP-Gal) to UDP-glucose (UDP-Glc) through a mechanism involving the transient reduction of NAD. The polypeptide is UDP-glucose 4-epimerase (galE) (Neisseria gonorrhoeae).